The following is a 128-amino-acid chain: Cyclin-dependent protein kinase inhibitor SMR1 (128 aa).

Residues 17–74 form a disordered region; the sequence is PIKIRSKTSKTKKDEGDDDEDDLRCSTPTSQEHKIPAVVDSPPPPPRKPRPPPSAPSA. The span at 57-71 shows a compositional bias: pro residues; that stretch reads SPPPPPRKPRPPPSA.

Interacts with CDKB1-1. Interacts with CPR5. In terms of tissue distribution, expressed in roots, leaves, stems, siliques and flowers. Expressed in the root elongation zone.

It localises to the nucleus. Its function is as follows. Probable cyclin-dependent protein kinase (CDK) inhibitor that functions as a repressor of mitosis in the endoreduplication cell cycle. Cooperates with SIM and SMR2 to promote endoreplication during leaf development. Specifically regulates endoreduplication in epidermal pavement cells to produce the cell size pattern. Is necessary for giant cell formation. Positive regulator of effector-triggered immunity (ETI). This chain is Cyclin-dependent protein kinase inhibitor SMR1, found in Arabidopsis thaliana (Mouse-ear cress).